A 312-amino-acid chain; its full sequence is DNA-directed RNA polymerase subunit alpha (312 aa).

Positions 1–229 (MLQYQIDRIE…ELFQPLATVT (229 aa)) are alpha N-terminal domain (alpha-NTD). The interval 239–312 (EPSAEAQIPL…ISIPQSRTSA (74 aa)) is alpha C-terminal domain (alpha-CTD).

It belongs to the RNA polymerase alpha chain family. As to quaternary structure, in cyanobacteria the RNAP catalytic core is composed of 2 alpha, 1 beta, 1 beta', 1 gamma and 1 omega subunit. When a sigma factor is associated with the core the holoenzyme is formed, which can initiate transcription.

The enzyme catalyses RNA(n) + a ribonucleoside 5'-triphosphate = RNA(n+1) + diphosphate. Functionally, DNA-dependent RNA polymerase catalyzes the transcription of DNA into RNA using the four ribonucleoside triphosphates as substrates. The polypeptide is DNA-directed RNA polymerase subunit alpha (Synechococcus sp. (strain CC9605)).